The primary structure comprises 660 residues: GRIP and coiled-coil domain-containing protein 2 (660 aa).

The tract at residues 1 to 28 is disordered; sequence MSAPESSISPVPPPGSSSGGGKKLDSLP. 3 coiled-coil regions span residues 30–92, 115–464, and 517–596; these read EDLV…VENN, EWKE…KAIA, and DEYR…EYLK. The 52-residue stretch at 585–636 folds into the GRIP domain; that stretch reads ELSNEKNMEYLKNVFVQFLKPESVPAERDQLVIVLQRVLHLSPKEVEILKAA.

This is GRIP and coiled-coil domain-containing protein 2 from Caenorhabditis elegans.